We begin with the raw amino-acid sequence, 179 residues long: TPD1 protein homolog 1 (179 aa).

The first 30 residues, 1 to 30 (MRMEHIYKFQHWLFFIGLGVLLSLSLSVKA), serve as a signal peptide directing secretion.

The polypeptide is TPD1 protein homolog 1 (Arabidopsis thaliana (Mouse-ear cress)).